The primary structure comprises 281 residues: MSQKTIRVGNIEIANDKPFVLFGGINVLESRDLAMQACEEYVRVTEKLGIPYVFKASFDKANRSSITSFRGPGLEEGMKIFEKVKKTFGVPVITDVHEPWQAQPVADVCDIIQLPAFLSRQTDLVVAMAKTGAVINIKKAQFLAPQEMKHILKKCEEAGNDQLILCERGSSFGYNNLVVDMLGFGIMKQFEYPVFFDVTHALQMPGGRADSAGGRRAQVTDLAKAGLSQGLAGLFLEAHPDPDNAKCDGPCALRLNKLEAFLTQLKQLDDLVKNFPPIETA.

The protein belongs to the KdsA family.

The protein localises to the cytoplasm. It catalyses the reaction D-arabinose 5-phosphate + phosphoenolpyruvate + H2O = 3-deoxy-alpha-D-manno-2-octulosonate-8-phosphate + phosphate. The protein operates within carbohydrate biosynthesis; 3-deoxy-D-manno-octulosonate biosynthesis; 3-deoxy-D-manno-octulosonate from D-ribulose 5-phosphate: step 2/3. Its pathway is bacterial outer membrane biogenesis; lipopolysaccharide biosynthesis. This Stutzerimonas stutzeri (strain A1501) (Pseudomonas stutzeri) protein is 2-dehydro-3-deoxyphosphooctonate aldolase.